The sequence spans 382 residues: UDP-4-amino-4-deoxy-L-arabinose--oxoglutarate aminotransferase (382 aa).

Residue lysine 182 is modified to N6-(pyridoxal phosphate)lysine.

It belongs to the DegT/DnrJ/EryC1 family. ArnB subfamily. As to quaternary structure, homodimer. It depends on pyridoxal 5'-phosphate as a cofactor.

It carries out the reaction UDP-4-amino-4-deoxy-beta-L-arabinose + 2-oxoglutarate = UDP-beta-L-threo-pentopyranos-4-ulose + L-glutamate. It participates in nucleotide-sugar biosynthesis; UDP-4-deoxy-4-formamido-beta-L-arabinose biosynthesis; UDP-4-deoxy-4-formamido-beta-L-arabinose from UDP-alpha-D-glucuronate: step 2/3. Its pathway is bacterial outer membrane biogenesis; lipopolysaccharide biosynthesis. In terms of biological role, catalyzes the conversion of UDP-4-keto-arabinose (UDP-Ara4O) to UDP-4-amino-4-deoxy-L-arabinose (UDP-L-Ara4N). The modified arabinose is attached to lipid A and is required for resistance to polymyxin and cationic antimicrobial peptides. This Yersinia enterocolitica serotype O:8 / biotype 1B (strain NCTC 13174 / 8081) protein is UDP-4-amino-4-deoxy-L-arabinose--oxoglutarate aminotransferase.